A 210-amino-acid polypeptide reads, in one-letter code: Na(+)-translocating NADH-quinone reductase subunit D (210 aa).

A run of 6 helical transmembrane segments spans residues 10-30 (ILFA…GVCS), 42-62 (FVMT…VSLI), 72-92 (IIVQ…VLKA), 103-123 (VFVG…AYAM), 131-151 (FIDG…VAFF), and 178-198 (NGLM…IWAI).

It belongs to the NqrDE/RnfAE family. As to quaternary structure, composed of six subunits; NqrA, NqrB, NqrC, NqrD, NqrE and NqrF.

The protein localises to the cell inner membrane. The catalysed reaction is a ubiquinone + n Na(+)(in) + NADH + H(+) = a ubiquinol + n Na(+)(out) + NAD(+). Its function is as follows. NQR complex catalyzes the reduction of ubiquinone-1 to ubiquinol by two successive reactions, coupled with the transport of Na(+) ions from the cytoplasm to the periplasm. NqrA to NqrE are probably involved in the second step, the conversion of ubisemiquinone to ubiquinol. The chain is Na(+)-translocating NADH-quinone reductase subunit D from Photobacterium profundum (strain SS9).